Here is a 112-residue protein sequence, read N- to C-terminus: MAVRIRLAKFGRKHHPIYRIVVMDAKSPREGKYIDILGTYDPKRKVLINVYPEKVKEWVLKGVELSHRAKAILWNHGILKEVVPEGYEMKRVGDYYVFEKRESKKSKGGEAA.

This sequence belongs to the bacterial ribosomal protein bS16 family.

This Aquifex aeolicus (strain VF5) protein is Small ribosomal subunit protein bS16.